The sequence spans 521 residues: Manganese transporter pdt1 (521 aa).

Position 42 is a phosphoserine (Ser-42). Position 43 is a phosphothreonine (Thr-43). The next 12 membrane-spanning stretches (helical) occupy residues 71–91 (YCKFIGPGFLIAVAYIDPGNY), 104–124 (KLLFIVFLSNLFAVYLQSLCI), 152–172 (VLAEIAIIATDIAEVIGTAVA), 179–199 (IPLVAGVVITILDVLLVLIAW), 210–230 (IFETAVALLVLVVAISFAVVL), 233–253 (VHIGGAGTVFKGFLPSSTVFS), 260–280 (SIGILGATVMPHSLFLGSGLV), 325–345 (LFTFALFTNSSILIVAGAVFY), 373–393 (LFAVALLFSGMSAGYVCTIAG), 417–437 (IAIIPCLVVSAAVGQSGLNQV), 440–460 (ASQVCLSILLPFLTFPLVMFT), and 495–515 (IVTWAIWLFLTALNLLLIVWL).

The protein belongs to the NRAMP family.

The protein localises to the endoplasmic reticulum membrane. Functionally, transports manganese ions into the cell. Regulates cell morphogenesis through control of manganese homeostasis. The sequence is that of Manganese transporter pdt1 (pdt1) from Schizosaccharomyces pombe (strain 972 / ATCC 24843) (Fission yeast).